A 521-amino-acid polypeptide reads, in one-letter code: Citrinin biosynthesis cluster MFS transporter ctnC (521 aa).

The tract at residues Met-1–Lys-29 is disordered. The next 8 helical transmembrane spans lie at Ser-58 to Phe-78, Val-95 to Gly-115, Leu-124 to Ala-144, Phe-155 to Phe-175, Ala-182 to Met-202, Trp-237 to Leu-257, Ile-313 to Val-333, and Gly-349 to Val-369. N-linked (GlcNAc...) asparagine glycosylation occurs at Asn-383. Transmembrane regions (helical) follow at residues Leu-392–Thr-412, Ile-417–Trp-437, Ala-465–Trp-485, and Leu-489–Ala-509.

The protein belongs to the major facilitator superfamily. CAR1 family.

Its subcellular location is the membrane. Functionally, MFS transporter; part of the gene cluster that mediates the biosynthesis the mycotoxin citrinin, a hepato-nephrotoxic compound to humans due to inhibition of respiration complex III. The chain is Citrinin biosynthesis cluster MFS transporter ctnC (ctnC) from Monascus purpureus (Red mold).